The sequence spans 455 residues: DNA N(6)-methyladenine demethylase ALKBH1C (455 aa).

Disordered stretches follow at residues 1–114 (MNHS…AGDN) and 173–194 (SSVE…SNES). The 111-residue stretch at 345-455 (LPDICIVNFY…GRLNLTFRQY (111 aa)) folds into the Fe2OG dioxygenase domain. 352–354 (NFY) contacts 2-oxoglutarate. Positions 363, 365, and 423 each coordinate Fe cation. Position 447–453 (447–453 (RLNLTFR)) interacts with 2-oxoglutarate.

It belongs to the alkB family. It depends on Fe(2+) as a cofactor. Expressed at low levels in roots and seedlings, but barely in cauline leaves, rosette leaves, stems, siliques and flowers.

The protein resides in the nucleus. It localises to the cytoplasm. It catalyses the reaction an N(6)-methyl-2'-deoxyadenosine in DNA + 2-oxoglutarate + O2 = a 2'-deoxyadenosine in DNA + formaldehyde + succinate + CO2. Functionally, dioxygenase that catalyzes DNA N(6)-methyladenine (6 mA) demethylation with a low efficiency. This is DNA N(6)-methyladenine demethylase ALKBH1C from Arabidopsis thaliana (Mouse-ear cress).